We begin with the raw amino-acid sequence, 395 residues long: Demethylmacrocin O-methyltransferase (395 aa).

It catalyses the reaction demethylmacrocin + S-adenosyl-L-methionine = macrocin + S-adenosyl-L-homocysteine + H(+). The protein operates within antibiotic biosynthesis; tylosin biosynthesis. In terms of biological role, O-methyltransferase that catalyzes the conversion of demethylmacrocin to macrocin, the penultimate step of tylosin antibiotic biosynthesis. Also able to mediate the conversion of demethyllactenocin to lactenocin. This is Demethylmacrocin O-methyltransferase (tylE) from Streptomyces fradiae (Streptomyces roseoflavus).